Here is a 248-residue protein sequence, read N- to C-terminus: 1-(5-phosphoribosyl)-5-[(5-phosphoribosylamino)methylideneamino] imidazole-4-carboxamide isomerase (248 aa).

Catalysis depends on D8, which acts as the Proton acceptor. The active-site Proton donor is D129.

It belongs to the HisA/HisF family.

It is found in the cytoplasm. The catalysed reaction is 1-(5-phospho-beta-D-ribosyl)-5-[(5-phospho-beta-D-ribosylamino)methylideneamino]imidazole-4-carboxamide = 5-[(5-phospho-1-deoxy-D-ribulos-1-ylimino)methylamino]-1-(5-phospho-beta-D-ribosyl)imidazole-4-carboxamide. It participates in amino-acid biosynthesis; L-histidine biosynthesis; L-histidine from 5-phospho-alpha-D-ribose 1-diphosphate: step 4/9. The protein is 1-(5-phosphoribosyl)-5-[(5-phosphoribosylamino)methylideneamino] imidazole-4-carboxamide isomerase of Sinorhizobium medicae (strain WSM419) (Ensifer medicae).